Here is a 78-residue protein sequence, read N- to C-terminus: Large ribosomal subunit protein bL28 (78 aa).

A disordered region spans residues 1-20; the sequence is MSRVCQVTSKRPAVGNNRSH.

This sequence belongs to the bacterial ribosomal protein bL28 family.

The protein is Large ribosomal subunit protein bL28 of Haemophilus ducreyi (strain 35000HP / ATCC 700724).